Reading from the N-terminus, the 428-residue chain is Putative zinc metalloprotease LL2128 (428 aa).

His-19 contributes to the Zn(2+) binding site. Residue Glu-20 is part of the active site. His-23 contributes to the Zn(2+) binding site. Transmembrane regions (helical) follow at residues 188 to 210 (GPLNNFILGIIAFIVLTFVQGGV), 354 to 376 (IVYLLAMLSINLGIVNLFPIPVL), and 401 to 423 (IITMVGVVFMLVLFVAVTWNDIL). Residues 188-282 (GPLNNFILGI…SETLSVTPKK (95 aa)) form the PDZ domain.

Belongs to the peptidase M50B family. It depends on Zn(2+) as a cofactor.

It is found in the cell membrane. In Lactococcus lactis subsp. lactis (strain IL1403) (Streptococcus lactis), this protein is Putative zinc metalloprotease LL2128.